Reading from the N-terminus, the 360-residue chain is Proline-rich protein 11 (360 aa).

2 disordered regions span residues 20-43 (KKKE…SPER) and 174-201 (PPTL…PPLA). At T33 the chain carries Phosphothreonine. Position 40 is a phosphoserine (S40). Positions 175–201 (PTLPQPASHFPPPPPPPPLPPPPPPLA) are enriched in pro residues. The Phosphodegron signature appears at 285–291 (LITPGKS). T287 carries the post-translational modification Phosphothreonine. Phosphoserine is present on S291. Positions 296 to 304 (RKLLRKVDV) match the D-box motif. The KEN box motif lies at 316–318 (KEN). The short motif at 325-330 (LTPVMT) is the Phosphodegron element. The segment at 340–360 (AHPRSPTPTLPLSTSSFDEQN) is disordered. Residue S344 is modified to Phosphoserine. Phosphothreonine is present on residues T346 and T348. Low complexity predominate over residues 349–360 (LPLSTSSFDEQN).

Ubiquitinated. Rapidly degraded by the proteasome; degradation may involve FBXW7-specific phosphorylated phosphodegron motifs. As to expression, ubiquitously expressed.

It is found in the cytoplasm. Its subcellular location is the nucleus. Plays a critical role in cell cycle progression. The protein is Proline-rich protein 11 (PRR11) of Homo sapiens (Human).